Here is a 484-residue protein sequence, read N- to C-terminus: MNEDMMTEAERASIAADGTDGLLGKRGKGVFHIHTLGCQMNVHDSERIAGVLEANGYVPATEDQINDNDLDLLVLNTCAVRENAAERMYGTIGRFNRVKLVRPNLQIAVGGCMAQLDRKKIADTAPWVSAVFGTKNIEDLPKLLDQNRATGKAQVQVTEQLRQFPSQLPAARASRISSWVAISVGCNNTCTFCIVPTTRGKEKDRRPGDILDEIRQCVADGAKEVTLLGQNVNSFGYGIGDRYAFSKLLRACGTIDGLERVRFTSPHPAAFTDDVIAAMAETPNIMHQLHFPLQSGSDRILRAMRRSYRSAKFLDILGRIRAAMPDAQISTDIIVGFPGETEEDFQQTMDVVRQARFSSAFTFIYSPRPGTPAAAMEQIPRDVVQDRFDRLVALQEQITEENLATFEGRDVEVMITGKLGKKDTDTHRVTGREKTGVLVHIGVPEGEPVPEIGDFVTATVTHAGRHNLLADPDVAAGQTYSVRH.

Residues 29-149 (GVFHIHTLGC…LPKLLDQNRA (121 aa)) form the MTTase N-terminal domain. [4Fe-4S] cluster-binding residues include Cys38, Cys78, Cys112, Cys186, Cys190, and Cys193. In terms of domain architecture, Radical SAM core spans 172-401 (RASRISSWVA…VALQEQITEE (230 aa)). In terms of domain architecture, TRAM spans 404 to 474 (ATFEGRDVEV…RHNLLADPDV (71 aa)).

Belongs to the methylthiotransferase family. MiaB subfamily. Monomer. It depends on [4Fe-4S] cluster as a cofactor.

The protein localises to the cytoplasm. The enzyme catalyses N(6)-dimethylallyladenosine(37) in tRNA + (sulfur carrier)-SH + AH2 + 2 S-adenosyl-L-methionine = 2-methylsulfanyl-N(6)-dimethylallyladenosine(37) in tRNA + (sulfur carrier)-H + 5'-deoxyadenosine + L-methionine + A + S-adenosyl-L-homocysteine + 2 H(+). Catalyzes the methylthiolation of N6-(dimethylallyl)adenosine (i(6)A), leading to the formation of 2-methylthio-N6-(dimethylallyl)adenosine (ms(2)i(6)A) at position 37 in tRNAs that read codons beginning with uridine. The chain is tRNA-2-methylthio-N(6)-dimethylallyladenosine synthase from Bifidobacterium longum (strain DJO10A).